The following is a 498-amino-acid chain: Ammonium transporter 1 member 1 (498 aa).

Transmembrane regions (helical) follow at residues 39 to 59 (LLFS…LCAG), 74 to 94 (VLDA…FAFG), 120 to 140 (FFLF…GSIA), 148 to 168 (YLIY…HWIW), 192 to 212 (FAGS…GALI), 236 to 256 (LVVL…PGSF), 274 to 296 (SGVG…TTLF), 307 to 327 (VVDV…GCSV), 331 to 351 (WAAI…NALA), 360 to 380 (LEAA…TALF), and 411 to 431 (VIQI…LFYG).

It belongs to the ammonia transporter channel (TC 1.A.11.2) family. As to expression, expressed in roots and shoots.

The protein localises to the membrane. Ammonium transporter probably involved in ammonium uptake from the soil. The chain is Ammonium transporter 1 member 1 (AMT1-1) from Oryza sativa subsp. japonica (Rice).